Consider the following 195-residue polypeptide: MMRRASQERRTTETKIKLHLQLDESENISIRTGVGFFDHMLTLFAKHGRFGLQIEAVGDMFVDAHHTVEDVGIVLGNCLREVLQNKEGMNRYGAAYVPMDEALGFVAIDISGRSYLVFQGELVNPKLGDFDTELTEEFFRAVAHAAHITLHARILYGNNTHHKIEALFKAFGRALREAVDKNEKIVGINSTKGML.

It belongs to the imidazoleglycerol-phosphate dehydratase family.

Its subcellular location is the cytoplasm. The catalysed reaction is D-erythro-1-(imidazol-4-yl)glycerol 3-phosphate = 3-(imidazol-4-yl)-2-oxopropyl phosphate + H2O. It participates in amino-acid biosynthesis; L-histidine biosynthesis; L-histidine from 5-phospho-alpha-D-ribose 1-diphosphate: step 6/9. In Bacillus cytotoxicus (strain DSM 22905 / CIP 110041 / 391-98 / NVH 391-98), this protein is Imidazoleglycerol-phosphate dehydratase.